Here is a 90-residue protein sequence, read N- to C-terminus: Large ribosomal subunit protein bL27 (90 aa).

Positions 1–24 are disordered; sequence MAHKKGTGSTRNGRDSNSKRLGVK.

Belongs to the bacterial ribosomal protein bL27 family.

The sequence is that of Large ribosomal subunit protein bL27 from Prochlorococcus marinus (strain NATL1A).